Reading from the N-terminus, the 508-residue chain is Glycerol kinase (508 aa).

T14 is an ADP binding site. Residues T14, T15, and S16 each contribute to the ATP site. T14 is a sn-glycerol 3-phosphate binding site. R18 contributes to the ADP binding site. The sn-glycerol 3-phosphate site is built by R84, E85, and Y136. R84, E85, and Y136 together coordinate glycerol. H232 is subject to Phosphohistidine; by HPr. D246 is a sn-glycerol 3-phosphate binding site. Residues D246 and Q247 each coordinate glycerol. ADP-binding residues include T268 and G311. ATP-binding residues include T268, G311, Q315, and G412. ADP contacts are provided by G412 and N416.

It belongs to the FGGY kinase family. As to quaternary structure, homotetramer and homodimer (in equilibrium). The phosphoenolpyruvate-dependent sugar phosphotransferase system (PTS), including enzyme I, and histidine-containing protein (HPr) are required for the phosphorylation, which leads to the activation of the enzyme.

It carries out the reaction glycerol + ATP = sn-glycerol 3-phosphate + ADP + H(+). It functions in the pathway polyol metabolism; glycerol degradation via glycerol kinase pathway; sn-glycerol 3-phosphate from glycerol: step 1/1. Activated by phosphorylation and inhibited by fructose 1,6-bisphosphate (FBP). Key enzyme in the regulation of glycerol uptake and metabolism. Catalyzes the phosphorylation of glycerol to yield sn-glycerol 3-phosphate. The polypeptide is Glycerol kinase (Streptococcus pyogenes serotype M4 (strain MGAS10750)).